A 519-amino-acid polypeptide reads, in one-letter code: Cyclic AMP-responsive element-binding protein 3-like protein 2 (519 aa).

Residues 1 to 374 are Cytoplasmic-facing; it reads MEIMDSGEPF…SCRVTGTQTS (374 aa). Disordered stretches follow at residues 58-77, 85-121, and 193-261; these read GRGDAMDTEEELTRASPVPP, YSLCGDSRPQSPLSHLPGEPGSDAADSESDEWPMEQE, and GLEC…SGPL. Positions 109-119 are enriched in acidic residues; sequence ADSESDEWPME. Low complexity-rich tracts occupy residues 205 to 217 and 240 to 249; these read SSVGSDSEGSQSP and PSSLSSSPLL. The bZIP domain occupies 291–354; sequence ALKKIRRKIK…KSLLQQLHSL (64 aa). The interval 293–322 is basic motif; it reads KKIRRKIKNKISAQESRRKKKEYVDALEKK. The leucine-zipper stretch occupies residues 333–354; the sequence is LRRKVENLECTNKSLLQQLHSL. A helical; Signal-anchor for type II membrane protein transmembrane segment spans residues 375 to 395; it reads TCLMVVVLCFSLFLGSFYPGL. Over 396–519 the chain is Lumenal; the sequence is SPCSSITKAD…QLDRTVNETS (124 aa). Residues 423-426 carry the S1P recognition motif; it reads RSLL. N-linked (GlcNAc...) asparagine glycans are attached at residues Asn-485, Asn-503, and Asn-516.

This sequence belongs to the bZIP family. ATF subfamily. As to quaternary structure, binds DNA as a dimer. In terms of processing, upon ER stress, translocated to the Golgi apparatus, where it is processed by regulated intramembrane proteolysis (RIP) to release the cytosol-facing N-terminal transcription factor domain. The cleavage is performed sequentially by site-1 and site-2 proteases (S1P/mbtps1 and S2P/mbtps2).

The protein localises to the endoplasmic reticulum membrane. Its subcellular location is the nucleus. Its function is as follows. Transcription factor involved in unfolded protein response (UPR). In the absence of endoplasmic reticulum (ER) stress, inserted into ER membranes, with N-terminal DNA-binding and transcription activation domains oriented toward the cytosolic face of the membrane. In response to ER stress, transported to the Golgi, where it is cleaved in a site-specific manner by resident proteases S1P/mbtps1 and S2P/mbtps2. The released N-terminal cytosolic domain is translocated to the nucleus to effect transcription of specific target genes. Plays a critical role in chondrogenesis. May protect neuroblastoma cells from ER stress-induced death. In vitro activates transcription of target genes via direct binding to the CRE site. This chain is Cyclic AMP-responsive element-binding protein 3-like protein 2 (creb3l2), found in Danio rerio (Zebrafish).